We begin with the raw amino-acid sequence, 237 residues long: DNA repair protein RecO (237 aa).

This sequence belongs to the RecO family.

In terms of biological role, involved in DNA repair and RecF pathway recombination. In Flavobacterium johnsoniae (strain ATCC 17061 / DSM 2064 / JCM 8514 / BCRC 14874 / CCUG 350202 / NBRC 14942 / NCIMB 11054 / UW101) (Cytophaga johnsonae), this protein is DNA repair protein RecO.